The primary structure comprises 187 residues: Threonylcarbamoyl-AMP synthase (187 aa).

The YrdC-like domain occupies 4–187 (TLDLDRAVAT…DARSGQILRD (184 aa)).

This sequence belongs to the SUA5 family. TsaC subfamily.

Its subcellular location is the cytoplasm. The enzyme catalyses L-threonine + hydrogencarbonate + ATP = L-threonylcarbamoyladenylate + diphosphate + H2O. In terms of biological role, required for the formation of a threonylcarbamoyl group on adenosine at position 37 (t(6)A37) in tRNAs that read codons beginning with adenine. Catalyzes the conversion of L-threonine, HCO(3)(-)/CO(2) and ATP to give threonylcarbamoyl-AMP (TC-AMP) as the acyladenylate intermediate, with the release of diphosphate. The polypeptide is Threonylcarbamoyl-AMP synthase (Xanthomonas euvesicatoria pv. vesicatoria (strain 85-10) (Xanthomonas campestris pv. vesicatoria)).